The sequence spans 276 residues: Orotidine 5'-phosphate decarboxylase (276 aa).

Substrate contacts are provided by residues Asp-40, 62–64, 93–102, Tyr-228, and Arg-246; these read KTH and DRKFIDIGNT. Lys-95 acts as the Proton donor in catalysis.

The protein belongs to the OMP decarboxylase family.

It catalyses the reaction orotidine 5'-phosphate + H(+) = UMP + CO2. It participates in pyrimidine metabolism; UMP biosynthesis via de novo pathway; UMP from orotate: step 2/2. This chain is Orotidine 5'-phosphate decarboxylase (pyrG), found in Penicillium nalgiovense.